A 366-amino-acid polypeptide reads, in one-letter code: Holliday junction branch migration complex subunit RuvB (366 aa).

Residues 1-49 are disordered; the sequence is MAIISSKKQPPEPNGQPNKRPESAPAAPKEKVLQPEAAIDEQGKQEESI. A large ATPase domain (RuvB-L) region spans residues 13–210; it reads PNGQPNKRPE…FGLIQKLRFY (198 aa). Residues Ile49, Arg50, Gly91, Lys94, Thr95, Thr96, 157-159, Arg200, Tyr210, and Arg247 contribute to the ATP site; that span reads EDY. Thr95 is a Mg(2+) binding site. The tract at residues 211–281 is small ATPAse domain (RuvB-S); sequence EVDELSQIVL…IAAEALQLFQ (71 aa). The head domain (RuvB-H) stretch occupies residues 284–366; the sequence is PCGLDWTDRR…TPPNEQLSLL (83 aa). Residues Arg339 and Arg344 each contribute to the DNA site.

It belongs to the RuvB family. In terms of assembly, homohexamer. Forms an RuvA(8)-RuvB(12)-Holliday junction (HJ) complex. HJ DNA is sandwiched between 2 RuvA tetramers; dsDNA enters through RuvA and exits via RuvB. An RuvB hexamer assembles on each DNA strand where it exits the tetramer. Each RuvB hexamer is contacted by two RuvA subunits (via domain III) on 2 adjacent RuvB subunits; this complex drives branch migration. In the full resolvosome a probable DNA-RuvA(4)-RuvB(12)-RuvC(2) complex forms which resolves the HJ.

Its subcellular location is the cytoplasm. The catalysed reaction is ATP + H2O = ADP + phosphate + H(+). Functionally, the RuvA-RuvB-RuvC complex processes Holliday junction (HJ) DNA during genetic recombination and DNA repair, while the RuvA-RuvB complex plays an important role in the rescue of blocked DNA replication forks via replication fork reversal (RFR). RuvA specifically binds to HJ cruciform DNA, conferring on it an open structure. The RuvB hexamer acts as an ATP-dependent pump, pulling dsDNA into and through the RuvAB complex. RuvB forms 2 homohexamers on either side of HJ DNA bound by 1 or 2 RuvA tetramers; 4 subunits per hexamer contact DNA at a time. Coordinated motions by a converter formed by DNA-disengaged RuvB subunits stimulates ATP hydrolysis and nucleotide exchange. Immobilization of the converter enables RuvB to convert the ATP-contained energy into a lever motion, pulling 2 nucleotides of DNA out of the RuvA tetramer per ATP hydrolyzed, thus driving DNA branch migration. The RuvB motors rotate together with the DNA substrate, which together with the progressing nucleotide cycle form the mechanistic basis for DNA recombination by continuous HJ branch migration. Branch migration allows RuvC to scan DNA until it finds its consensus sequence, where it cleaves and resolves cruciform DNA. In Trichormus variabilis (strain ATCC 29413 / PCC 7937) (Anabaena variabilis), this protein is Holliday junction branch migration complex subunit RuvB.